Here is a 98-residue protein sequence, read N- to C-terminus: Large ribosomal subunit protein bL28 (98 aa).

The protein belongs to the bacterial ribosomal protein bL28 family.

The sequence is that of Large ribosomal subunit protein bL28 from Rhizobium etli (strain ATCC 51251 / DSM 11541 / JCM 21823 / NBRC 15573 / CFN 42).